A 274-amino-acid polypeptide reads, in one-letter code: Anamorsin homolog (274 aa).

Positions 1–154 (MDRTRKQCSV…KKPSWKIGSS (154 aa)) are N-terminal SAM-like domain. Positions 154–185 (SFALKKSTKGSVKVNLDDDLIDEDSLLTEEDM) are linker. [2Fe-2S] cluster is bound by residues cysteine 196, cysteine 205, cysteine 208, and cysteine 210. The segment at 196-210 (CEVGSTRKACKNCTC) is fe-S binding site A. The [4Fe-4S] cluster site is built by cysteine 235, cysteine 238, cysteine 246, and cysteine 249. 2 short sequence motifs (cx2C motif) span residues 235-238 (CGSC) and 246-249 (CSTC). Residues 235 to 249 (CGSCGLGDAFRCSTC) are fe-S binding site B.

This sequence belongs to the anamorsin family. As to quaternary structure, monomer. Requires [2Fe-2S] cluster as cofactor. [4Fe-4S] cluster is required as a cofactor.

It localises to the cytoplasm. It is found in the mitochondrion intermembrane space. Functionally, component of the cytosolic iron-sulfur (Fe-S) protein assembly (CIA) machinery. Required for the maturation of extramitochondrial Fe-S proteins. Part of an electron transfer chain functioning in an early step of cytosolic Fe-S biogenesis, facilitating the de novo assembly of a [4Fe-4S] cluster on the cytosolic Fe-S scaffold complex. Electrons are transferred from NADPH via a FAD- and FMN-containing diflavin oxidoreductase. Together with the diflavin oxidoreductase, also required for the assembly of the diferric tyrosyl radical cofactor of ribonucleotide reductase (RNR), probably by providing electrons for reduction during radical cofactor maturation in the catalytic small subunit. The polypeptide is Anamorsin homolog (Ricinus communis (Castor bean)).